The following is a 367-amino-acid chain: Cytochrome b (367 aa).

A run of 4 helical transmembrane segments spans residues 20–40 (MGSI…LLSM), 64–85 (WFLR…YAHI), 101–121 (WMVG…GYVL), and 166–186 (FFSL…LHII). H70 and H84 together coordinate heme b. 2 residues coordinate heme b: H170 and H184. A ubiquinone is bound at residue H189. The next 4 membrane-spanning stretches (helical) occupy residues 214–234 (IKDS…TFFS), 276–296 (LGGV…PLSS), 308–328 (IYQV…WLGA), and 335–355 (YLSL…LLGM).

It belongs to the cytochrome b family. In terms of assembly, the main subunits of complex b-c1 are: cytochrome b, cytochrome c1 and the Rieske protein. The cofactor is heme b.

The protein resides in the mitochondrion inner membrane. In terms of biological role, component of the ubiquinol-cytochrome c reductase complex (complex III or cytochrome b-c1 complex) that is part of the mitochondrial respiratory chain. The b-c1 complex mediates electron transfer from ubiquinol to cytochrome c. Contributes to the generation of a proton gradient across the mitochondrial membrane that is then used for ATP synthesis. This Albinaria caerulea (Land snail) protein is Cytochrome b (MT-CYB).